Consider the following 288-residue polypeptide: Keratin-associated protein 5-4 (288 aa).

A run of 9 repeats spans residues cysteine 49–proline 52, cysteine 55–proline 58, cysteine 61–proline 64, cysteine 201–proline 204, cysteine 220–proline 223, cysteine 239–proline 242, cysteine 249–proline 252, cysteine 268–proline 271, and cysteine 278–proline 281. Residues cysteine 49–proline 281 form a 9 X 4 AA repeats of C-C-X-P region.

The protein belongs to the KRTAP type 5 family. As to quaternary structure, interacts with hair keratins. As to expression, restricted to hair root, not detected in any other tissues.

Functionally, in the hair cortex, hair keratin intermediate filaments are embedded in an interfilamentous matrix, consisting of hair keratin-associated protein (KRTAP), which are essential for the formation of a rigid and resistant hair shaft through their extensive disulfide bond cross-linking with abundant cysteine residues of hair keratins. The matrix proteins include the high-sulfur and high-glycine-tyrosine keratins. This is Keratin-associated protein 5-4 (KRTAP5-4) from Homo sapiens (Human).